The chain runs to 236 residues: Small ribosomal subunit protein uS2c (236 aa).

Belongs to the universal ribosomal protein uS2 family.

The protein resides in the plastid. Its subcellular location is the chloroplast. This chain is Small ribosomal subunit protein uS2c (rps2), found in Lemna minor (Common duckweed).